A 610-amino-acid chain; its full sequence is MENKRNFFITIALSILILALWQVFYLGPKTEAQREQARIEEQQRQAQQAAQNRQASSSTGDTPQMPANPDSIPGQGDTKAAGAPLTRDAAIAQSPRIEIDTPSLRGSINLTGARLDDLYLKKYHETVSDKSPEIELLAPSSLKQGYFVELGFTGNDATGAVPGPNTVWVVEGNNKLTPSTPVTLTYTNDKNLTFKRVISVDDAYMFTVDDTIINNGGSTVSLASYGRVTRFNQPEHASATYVLHEGLIGVMGQDGLQEIKYAKIKDNKDISFKDVIGGWVGITDKYWAATLIPPQDEKFTGRFSHFTNDRPRYQSDLLSAPLTVAPGQSQKIQNRVFAGAKVVNTIQNYETKYHIKQFDLLIDWGWFYFITKPMFYLIDWIYKFTGNFGVAILVVTVLLKALFFPLANKSYKSMARMKLMQPKMTEIREKYADDKMKQQQAMMELYKREKINPLAGCWPVLVQIPVFFALYKVLYVTIEMRHAPFFGWIQDLAAPDPTSIFNLFGLLPYTVPHFLMIGVWPIIMGITMFLQMRMNPTPPDPTQAAIFTWMPIIFTFMLASFPAGLVIYWAWNNTLSIIQQSVIMKRQGVKIELFDNLKGLFRRKPKEANK.

Residues 7 to 27 form a helical membrane-spanning segment; that stretch reads FFITIALSILILALWQVFYLG. The disordered stretch occupies residues 36 to 82; it reads QARIEEQQRQAQQAAQNRQASSSTGDTPQMPANPDSIPGQGDTKAAG. The span at 44–55 shows a compositional bias: low complexity; the sequence is RQAQQAAQNRQA. 5 consecutive transmembrane segments (helical) span residues 358–378, 387–407, 458–478, 510–530, and 546–566; these read FDLL…FYLI, NFGV…FPLA, WPVL…YVTI, TVPH…TMFL, and IFTW…AGLV.

This sequence belongs to the OXA1/ALB3/YidC family. Type 1 subfamily. Interacts with the Sec translocase complex via SecD. Specifically interacts with transmembrane segments of nascent integral membrane proteins during membrane integration.

It is found in the cell inner membrane. In terms of biological role, required for the insertion and/or proper folding and/or complex formation of integral membrane proteins into the membrane. Involved in integration of membrane proteins that insert both dependently and independently of the Sec translocase complex, as well as at least some lipoproteins. Aids folding of multispanning membrane proteins. This is Membrane protein insertase YidC from Brucella suis biovar 1 (strain 1330).